Here is a 186-residue protein sequence, read N- to C-terminus: MARKKKTRRITDIMPIRKADKKIDITKARSGKKLTRYELDAKAREDKKKRKHKGLASGSRHSAVEEKANKLQNEIKDPKIGSKKKIPLVVEFVNKPEKGQVIPVIKQVKKQDPMKELENLENNEILNELLDALDAGKTISKSDQQFVDECLDRISELMEELGIEDEDESEDDLYRTFERMDINQFR.

Residues 39-77 are disordered; it reads LDAKAREDKKKRKHKGLASGSRHSAVEEKANKLQNEIKD. Basic and acidic residues predominate over residues 62–77; sequence SAVEEKANKLQNEIKD.

Belongs to the YihI family. As to quaternary structure, interacts with Der.

In terms of biological role, a GTPase-activating protein (GAP) that modifies Der/EngA GTPase function. May play a role in ribosome biogenesis. The protein is Der GTPase-activating protein YihI of Haemophilus influenzae (strain 86-028NP).